Reading from the N-terminus, the 474-residue chain is Glycogen synthase (474 aa).

K12 contacts ADP-alpha-D-glucose.

This sequence belongs to the glycosyltransferase 1 family. Bacterial/plant glycogen synthase subfamily.

The enzyme catalyses [(1-&gt;4)-alpha-D-glucosyl](n) + ADP-alpha-D-glucose = [(1-&gt;4)-alpha-D-glucosyl](n+1) + ADP + H(+). It participates in glycan biosynthesis; glycogen biosynthesis. Functionally, synthesizes alpha-1,4-glucan chains using ADP-glucose. The sequence is that of Glycogen synthase from Xanthomonas axonopodis pv. citri (strain 306).